A 118-amino-acid chain; its full sequence is MARIAGINIPDHKHAVIALTAIYGIGRTRAKAICAATAIAEDAKIKELSEAQIDTLREEVAKYTVEGDLRREVSMNIKRLMDLGCYRGLRHRRSLPLRGQRTKTNARTRKGPRKPIKK.

The interval 94–118 (SLPLRGQRTKTNARTRKGPRKPIKK) is disordered.

Belongs to the universal ribosomal protein uS13 family. As to quaternary structure, part of the 30S ribosomal subunit. Forms a loose heterodimer with protein S19. Forms two bridges to the 50S subunit in the 70S ribosome.

Its function is as follows. Located at the top of the head of the 30S subunit, it contacts several helices of the 16S rRNA. In the 70S ribosome it contacts the 23S rRNA (bridge B1a) and protein L5 of the 50S subunit (bridge B1b), connecting the 2 subunits; these bridges are implicated in subunit movement. Contacts the tRNAs in the A and P-sites. This chain is Small ribosomal subunit protein uS13, found in Shewanella amazonensis (strain ATCC BAA-1098 / SB2B).